The sequence spans 386 residues: Phosphoglycerate kinase (386 aa).

Residues 21–23 (DLN), R36, 59–62 (HLGR), R113, and R146 contribute to the substrate site. ATP contacts are provided by residues K197, E314, and 340–343 (GGDT).

Belongs to the phosphoglycerate kinase family. Monomer.

The protein localises to the cytoplasm. It carries out the reaction (2R)-3-phosphoglycerate + ATP = (2R)-3-phospho-glyceroyl phosphate + ADP. The protein operates within carbohydrate degradation; glycolysis; pyruvate from D-glyceraldehyde 3-phosphate: step 2/5. The protein is Phosphoglycerate kinase of Ectopseudomonas mendocina (strain ymp) (Pseudomonas mendocina).